We begin with the raw amino-acid sequence, 298 residues long: Phosphatidylserine decarboxylase proenzyme (298 aa).

Residues D113, H169, and S256 each act as charge relay system; for autoendoproteolytic cleavage activity in the active site. S256 (schiff-base intermediate with substrate; via pyruvic acid; for decarboxylase activity) is an active-site residue. At S256 the chain carries Pyruvic acid (Ser); by autocatalysis.

It belongs to the phosphatidylserine decarboxylase family. PSD-B subfamily. Prokaryotic type II sub-subfamily. In terms of assembly, heterodimer of a large membrane-associated beta subunit and a small pyruvoyl-containing alpha subunit. Pyruvate serves as cofactor. In terms of processing, is synthesized initially as an inactive proenzyme. Formation of the active enzyme involves a self-maturation process in which the active site pyruvoyl group is generated from an internal serine residue via an autocatalytic post-translational modification. Two non-identical subunits are generated from the proenzyme in this reaction, and the pyruvate is formed at the N-terminus of the alpha chain, which is derived from the carboxyl end of the proenzyme. The autoendoproteolytic cleavage occurs by a canonical serine protease mechanism, in which the side chain hydroxyl group of the serine supplies its oxygen atom to form the C-terminus of the beta chain, while the remainder of the serine residue undergoes an oxidative deamination to produce ammonia and the pyruvoyl prosthetic group on the alpha chain. During this reaction, the Ser that is part of the protease active site of the proenzyme becomes the pyruvoyl prosthetic group, which constitutes an essential element of the active site of the mature decarboxylase.

It localises to the cell membrane. It carries out the reaction a 1,2-diacyl-sn-glycero-3-phospho-L-serine + H(+) = a 1,2-diacyl-sn-glycero-3-phosphoethanolamine + CO2. It participates in phospholipid metabolism; phosphatidylethanolamine biosynthesis; phosphatidylethanolamine from CDP-diacylglycerol: step 2/2. In terms of biological role, catalyzes the formation of phosphatidylethanolamine (PtdEtn) from phosphatidylserine (PtdSer). This Desulfitobacterium hafniense (strain DSM 10664 / DCB-2) protein is Phosphatidylserine decarboxylase proenzyme.